Reading from the N-terminus, the 429-residue chain is Carbamoyl phosphate synthase arginine-specific small chain (429 aa).

A mitochondrion-targeting transit peptide spans 1-20; it reads MIRVIQPPLIASKQLFRRYL. One can recognise a Glutamine amidotransferase type-1 domain in the interval 218 to 406; it reads HIAVLDCGAK…FENIEQYRAT (189 aa). Cys-295 acts as the Nucleophile in catalysis. Active-site residues include His-379 and Glu-381.

It belongs to the CarA family. As to quaternary structure, heterodimer composed of 2 chains; the small (or glutamine) chain promotes the hydrolysis of glutamine to ammonia, which is used by the large (or ammonia) chain to synthesize carbamoyl phosphate.

Its subcellular location is the mitochondrion matrix. It catalyses the reaction hydrogencarbonate + L-glutamine + 2 ATP + H2O = carbamoyl phosphate + L-glutamate + 2 ADP + phosphate + 2 H(+). The enzyme catalyses L-glutamine + H2O = L-glutamate + NH4(+). Its pathway is amino-acid biosynthesis; L-arginine biosynthesis; carbamoyl phosphate from bicarbonate: step 1/1. Its function is as follows. Small subunit of the arginine-specific carbamoyl phosphate synthase (CPSase). CPSase catalyzes the formation of carbamoyl phosphate from the ammonia moiety of glutamine, carbonate, and phosphate donated by ATP, the first step of the arginine biosynthetic pathway. The small subunit (glutamine amidotransferase) binds and cleaves glutamine to supply the large subunit with the substrate ammonia. In Debaryomyces hansenii (strain ATCC 36239 / CBS 767 / BCRC 21394 / JCM 1990 / NBRC 0083 / IGC 2968) (Yeast), this protein is Carbamoyl phosphate synthase arginine-specific small chain (CPA1).